Here is a 1360-residue protein sequence, read N- to C-terminus: DNA-directed RNA polymerase subunit beta (1360 aa).

The protein belongs to the RNA polymerase beta chain family. The RNAP catalytic core consists of 2 alpha, 1 beta, 1 beta' and 1 omega subunit. When a sigma factor is associated with the core the holoenzyme is formed, which can initiate transcription.

The enzyme catalyses RNA(n) + a ribonucleoside 5'-triphosphate = RNA(n+1) + diphosphate. In terms of biological role, DNA-dependent RNA polymerase catalyzes the transcription of DNA into RNA using the four ribonucleoside triphosphates as substrates. This Ruthia magnifica subsp. Calyptogena magnifica protein is DNA-directed RNA polymerase subunit beta.